A 299-amino-acid chain; its full sequence is Oxygen-dependent coproporphyrinogen-III oxidase (299 aa).

Substrate is bound at residue S92. 2 residues coordinate Mn(2+): H96 and H106. The active-site Proton donor is the H106. N108 to R110 serves as a coordination point for substrate. Positions 145 and 175 each coordinate Mn(2+). The important for dimerization stretch occupies residues Y240–E275. Substrate is bound at residue G258 to R260.

This sequence belongs to the aerobic coproporphyrinogen-III oxidase family. Homodimer. Mn(2+) is required as a cofactor.

Its subcellular location is the cytoplasm. It carries out the reaction coproporphyrinogen III + O2 + 2 H(+) = protoporphyrinogen IX + 2 CO2 + 2 H2O. It functions in the pathway porphyrin-containing compound metabolism; protoporphyrin-IX biosynthesis; protoporphyrinogen-IX from coproporphyrinogen-III (O2 route): step 1/1. Its function is as follows. Involved in the heme biosynthesis. Catalyzes the aerobic oxidative decarboxylation of propionate groups of rings A and B of coproporphyrinogen-III to yield the vinyl groups in protoporphyrinogen-IX. The polypeptide is Oxygen-dependent coproporphyrinogen-III oxidase (Escherichia coli O127:H6 (strain E2348/69 / EPEC)).